Consider the following 524-residue polypeptide: Fusicoccadiene C-8 hydroxylase (524 aa).

Residues 16–36 (LQLLCIGPLVYACVSFIIKIV) traverse the membrane as a helical segment. Asparagine 126 and asparagine 344 each carry an N-linked (GlcNAc...) asparagine glycan. Residue cysteine 465 coordinates heme. The N-linked (GlcNAc...) asparagine glycan is linked to asparagine 496.

It belongs to the cytochrome P450 family. Heme serves as cofactor.

Its subcellular location is the membrane. Its pathway is mycotoxin biosynthesis. In terms of biological role, cytochrome P450 monooxygenase; part of the 2 gene clusters that mediate the biosynthesis of fusicoccins, diterpene glucosides that display phytohormone-like activity and function as potent activators of plasma membrane H(+)-ATPases in plants by modifying 14-3-3 proteins and cause the plant disease constriction canker. The first step in the pathway is performed by the fusicoccadiene synthase PaFS that possesses both prenyl transferase and terpene cyclase activity, converting isopentenyl diphosphate and dimethylallyl diphosphate into geranylgeranyl diphosphate (GGDP) and successively converting GGDP into fusicocca-2,10(14)-diene, a precursor for fusicoccin H. The second step is the oxidation at the C-8 position by the cytochrome P450 monooxygenase PaP450-2 to yield fusicocca-2,10(14)-diene-8-beta-ol. The cytochrome P450 monooxygenase PaP450-1 then catalyzes the hydroxylation at the C-16 position to produce fusicocca-2,10(14)-diene-8-beta,16-diol. The dioxygenase fc-dox then catalyzes the 16-oxydation of fusicocca-2,10(14)-diene-8-beta,16-diol to yield an aldehyde (8-beta-hydroxyfusicocca-1,10(14)-dien-16-al). The short-chain dehydrogenase/reductase fc-sdr catalyzes the reduction of the aldehyde to yield fusicocca-1,10(14)-diene-8-beta,16-diol. The next step is the hydroxylation at C-9 performed by the cytochrome P450 monooxygenase PaP450-3 that leads to fusicoccin H aglycon which is glycosylated to fusicoccin H by the O-glycosyltransferase PaGT. Hydroxylation at C-12 by the cytochrome P450 monooxygenase PaP450-4 leads then to the production of fusicoccin Q and is followed by methylation by the O-methyltransferase PaMT to yield fusicoccin P. Fusicoccin P is further converted to fusicoccin J via prenylation by the O-glucose prenyltransferase PaPT. Cytochrome P450 monooxygenase PaP450-5 then performs hydroxylation at C-19 to yield dideacetyl-fusicoccin A which is acetylated to 3'-O-deacetyl-fusicoccin A by the O-acetyltransferase PaAT-2. Finally, a another acetylation by the O-acetyltransferase PaAT-1 yields fusicoccin A. In Phomopsis amygdali (Fusicoccum amygdali), this protein is Fusicoccadiene C-8 hydroxylase.